A 285-amino-acid polypeptide reads, in one-letter code: GPN-loop GTPase 3 (285 aa).

Gly-13 to Thr-18 is a binding site for GTP. A Gly-Pro-Asn (GPN)-loop; involved in dimer interface motif is present at residues Gly-72–Asn-74. Thr-174–Asp-177 provides a ligand contact to GTP. A disordered region spans residues Lys-261–Pro-285. The span at Glu-265 to Phe-277 shows a compositional bias: acidic residues.

The protein belongs to the GPN-loop GTPase family. In terms of assembly, heterodimer with gpn1. Binds to RNA polymerase II (RNAPII).

Small GTPase required for proper localization of RNA polymerase II (RNAPII). May act at an RNAP assembly step prior to nuclear import. The protein is GPN-loop GTPase 3 of Xenopus tropicalis (Western clawed frog).